The chain runs to 224 residues: Non-structural protein V (224 aa).

Polar residues predominate over residues 54-65; the sequence is QKNIQHPTASHQ. Disordered regions lie at residues 54 to 96 and 150 to 171; these read QKNI…DPEP and TEFK…GGHR. Positions 170, 189, 193, 205, 207, 210, 214, and 217 each coordinate Zn(2+).

Belongs to the paramyxoviruses V protein family. As to quaternary structure, interacts with host IFIH1/MDA5 and DHX58/LGP2. Forms with host DDB1, CUL4A, STAT1, STAT2 and STAT3 the mumps virus V-dependent complex (VDC).

It is found in the virion. Its subcellular location is the host cytoplasm. Functionally, plays an essential role in the inhibition of host immune response. Prevents the establishment of cellular antiviral state by blocking interferon-alpha/beta (IFN-alpha/beta) production and signaling pathway. Interacts with host IFIH1/MDA5 and DHX58/LGP2 to inhibit the transduction pathway involved in the activation of IFN-beta promoter, thus protecting the virus against cell antiviral state. Blocks the type I and II interferon signaling pathways by interacting with host STAT1, STAT2 and STAT3, and mediating their ubiquitination and subsequent proteasomal degradation. This Mumps virus (strain SBL) (MuV) protein is Non-structural protein V.